We begin with the raw amino-acid sequence, 237 residues long: N-(5'-phosphoribosyl)anthranilate isomerase (237 aa).

It belongs to the TrpF family.

The enzyme catalyses N-(5-phospho-beta-D-ribosyl)anthranilate = 1-(2-carboxyphenylamino)-1-deoxy-D-ribulose 5-phosphate. Its pathway is amino-acid biosynthesis; L-tryptophan biosynthesis; L-tryptophan from chorismate: step 3/5. The polypeptide is N-(5'-phosphoribosyl)anthranilate isomerase (TRP1) (Komagataella pastoris (Yeast)).